A 361-amino-acid chain; its full sequence is UDP-N-acetylglucosamine--N-acetylmuramyl-(pentapeptide) pyrophosphoryl-undecaprenol N-acetylglucosamine transferase (361 aa).

UDP-N-acetyl-alpha-D-glucosamine contacts are provided by residues 11–13 (TGG), Asn-124, Arg-164, Ser-192, and Gln-295.

The protein belongs to the glycosyltransferase 28 family. MurG subfamily.

Its subcellular location is the cell membrane. It carries out the reaction di-trans,octa-cis-undecaprenyl diphospho-N-acetyl-alpha-D-muramoyl-L-alanyl-D-glutamyl-meso-2,6-diaminopimeloyl-D-alanyl-D-alanine + UDP-N-acetyl-alpha-D-glucosamine = di-trans,octa-cis-undecaprenyl diphospho-[N-acetyl-alpha-D-glucosaminyl-(1-&gt;4)]-N-acetyl-alpha-D-muramoyl-L-alanyl-D-glutamyl-meso-2,6-diaminopimeloyl-D-alanyl-D-alanine + UDP + H(+). The protein operates within cell wall biogenesis; peptidoglycan biosynthesis. Functionally, cell wall formation. Catalyzes the transfer of a GlcNAc subunit on undecaprenyl-pyrophosphoryl-MurNAc-pentapeptide (lipid intermediate I) to form undecaprenyl-pyrophosphoryl-MurNAc-(pentapeptide)GlcNAc (lipid intermediate II). In Deinococcus geothermalis (strain DSM 11300 / CIP 105573 / AG-3a), this protein is UDP-N-acetylglucosamine--N-acetylmuramyl-(pentapeptide) pyrophosphoryl-undecaprenol N-acetylglucosamine transferase.